Here is a 119-residue protein sequence, read N- to C-terminus: NAD(P)H-quinone oxidoreductase subunit M (119 aa).

Belongs to the complex I NdhM subunit family. As to quaternary structure, NDH-1 can be composed of about 15 different subunits; different subcomplexes with different compositions have been identified which probably have different functions.

It localises to the cellular thylakoid membrane. The enzyme catalyses a plastoquinone + NADH + (n+1) H(+)(in) = a plastoquinol + NAD(+) + n H(+)(out). The catalysed reaction is a plastoquinone + NADPH + (n+1) H(+)(in) = a plastoquinol + NADP(+) + n H(+)(out). NDH-1 shuttles electrons from an unknown electron donor, via FMN and iron-sulfur (Fe-S) centers, to quinones in the respiratory and/or the photosynthetic chain. The immediate electron acceptor for the enzyme in this species is believed to be plastoquinone. Couples the redox reaction to proton translocation, and thus conserves the redox energy in a proton gradient. Cyanobacterial NDH-1 also plays a role in inorganic carbon-concentration. The sequence is that of NAD(P)H-quinone oxidoreductase subunit M from Gloeothece citriformis (strain PCC 7424) (Cyanothece sp. (strain PCC 7424)).